The primary structure comprises 157 residues: Small ribosomal subunit protein uS7 (157 aa).

Belongs to the universal ribosomal protein uS7 family. Part of the 30S ribosomal subunit. Contacts proteins S9 and S11.

Its function is as follows. One of the primary rRNA binding proteins, it binds directly to 16S rRNA where it nucleates assembly of the head domain of the 30S subunit. Is located at the subunit interface close to the decoding center, probably blocks exit of the E-site tRNA. The polypeptide is Small ribosomal subunit protein uS7 (Desulfotalea psychrophila (strain LSv54 / DSM 12343)).